A 191-amino-acid polypeptide reads, in one-letter code: Potassium-transporting ATPase KdpC subunit (191 aa).

Residues 6–26 (PALVLFILLTLLTGGVYPLLT) traverse the membrane as a helical segment.

This sequence belongs to the KdpC family. The system is composed of three essential subunits: KdpA, KdpB and KdpC.

It localises to the cell inner membrane. Part of the high-affinity ATP-driven potassium transport (or Kdp) system, which catalyzes the hydrolysis of ATP coupled with the electrogenic transport of potassium into the cytoplasm. This subunit acts as a catalytic chaperone that increases the ATP-binding affinity of the ATP-hydrolyzing subunit KdpB by the formation of a transient KdpB/KdpC/ATP ternary complex. The sequence is that of Potassium-transporting ATPase KdpC subunit from Klebsiella pneumoniae (strain 342).